Here is a 267-residue protein sequence, read N- to C-terminus: Cell division protein FtsQ (267 aa).

At Met-1–Ala-32 the chain is on the cytoplasmic side. Residues Ile-33–Phe-53 form a helical membrane-spanning segment. Over Ala-54–Tyr-267 the chain is Periplasmic. The 69-residue stretch at Phe-73–Arg-141 folds into the POTRA domain.

The protein belongs to the FtsQ/DivIB family. FtsQ subfamily.

The protein resides in the cell inner membrane. Essential cell division protein. The sequence is that of Cell division protein FtsQ from Rickettsia felis (strain ATCC VR-1525 / URRWXCal2) (Rickettsia azadi).